We begin with the raw amino-acid sequence, 2515 residues long: Probable maltase-glucoamylase 2 (2515 aa).

The Cytoplasmic portion of the chain corresponds to 1–9 (MARKLSVLE). A helical membrane pass occupies residues 10–30 (VLLIIFCLIVVTIDILLLLLV). Residues 31-482 (LEETSDTSFT…DGVWIEMNEV (452 aa)) are Lumenal-facing. The P-type 1 domain maps to 41 to 88 (PECPEIPQSERIDCTPDQEVTEDICRWQYKCCWSPVADANVPRCFFPW). 3 disulfides stabilise this stretch: Cys-43-Cys-72, Cys-54-Cys-71, and Cys-65-Cys-84. The tract at residues 152–865 (SHENINLVDG…MDKQPANFIV (714 aa)) is maltase. An N-linked (GlcNAc...) asparagine glycan is attached at Asn-167. A Sulfotyrosine modification is found at Tyr-371. A glycan (N-linked (GlcNAc...) asparagine) is linked at Asn-421. The active-site Nucleophile is the Glu-478. Glu-481 is an active-site residue. Intrachain disulfides connect Cys-608/Cys-619, Cys-916/Cys-933, and Cys-928/Cys-946. A glycan (N-linked (GlcNAc...) asparagine) is linked at Asn-613. The region spanning 904–950 (WNLPVSDLEKFNCYPDDPTASEESCRQRGCLWEDTSTPGVPTCYYDT) is the P-type 2 domain. A glucoamylase region spans residues 1023-1766 (PLNTPPQPVG…GVNTYVTQVS (744 aa)). Tyr-1238 carries the post-translational modification Sulfotyrosine. Catalysis depends on Asp-1375, which acts as the Nucleophile. The active site involves Glu-1378. Disordered stretches follow at residues 1816 to 1901 (TPTK…PITT), 1994 to 2015 (STTV…STNA), and 2037 to 2091 (TVPD…SSTT). A compositionally biased stretch (polar residues) spans 1817–1831 (PTKTSTIPMSSHPSP). Low complexity predominate over residues 1832-1901 (STTNATSSET…STNATVPITT (70 aa)). N-linked (GlcNAc...) asparagine glycosylation is present at Asn-2249.

This sequence belongs to the glycosyl hydrolase 31 family.

It localises to the membrane. It catalyses the reaction Hydrolysis of terminal (1-&gt;4)-linked alpha-D-glucose residues successively from non-reducing ends of the chains with release of beta-D-glucose.. This is Probable maltase-glucoamylase 2 from Homo sapiens (Human).